Consider the following 192-residue polypeptide: Signal peptidase complex catalytic subunit sec11 (192 aa).

The Cytoplasmic segment spans residues 1–18 (MLSFLSSNLSSTRQSLAQ). The helical; Signal-anchor for type II membrane protein transmembrane segment at 19-39 (VLNFALVLSTAFMLWKGLSVF) threads the bilayer. Topologically, residues 40–192 (TASSSPIVVV…GLMVILQREQ (153 aa)) are lumenal. Residues Ser53, His92, and Asp133 each act as charge relay system in the active site. Residues 177–188 (VLLGIMGLMVIL) are C-terminal short (CTS) helix.

Belongs to the peptidase S26B family. Component of the signal peptidase complex (SPC) composed of a catalytic subunit SEC11 and three accessory subunits SPC1, SPC2 and SPC3. The complex induces a local thinning of the ER membrane which is used to measure the length of the signal peptide (SP) h-region of protein substrates. This ensures the selectivity of the complex towards h-regions shorter than 18-20 amino acids. SPC associates with the translocon complex.

The protein resides in the endoplasmic reticulum membrane. The enzyme catalyses Cleavage of hydrophobic, N-terminal signal or leader sequences from secreted and periplasmic proteins.. Functionally, catalytic component of the signal peptidase complex (SPC) which catalyzes the cleavage of N-terminal signal sequences from nascent proteins as they are translocated into the lumen of the endoplasmic reticulum. Specifically cleaves N-terminal signal peptides that contain a hydrophobic alpha-helix (h-region) shorter than 18-20 amino acids. This chain is Signal peptidase complex catalytic subunit sec11 (sec11), found in Aspergillus clavatus (strain ATCC 1007 / CBS 513.65 / DSM 816 / NCTC 3887 / NRRL 1 / QM 1276 / 107).